A 50-amino-acid polypeptide reads, in one-letter code: Protease inhibitor 2 (50 aa).

The Kazal-like domain maps to 2–50 (EDCVGRKACTREWYPVCGSDGVTYSNPCNFSAQQEQCDPNITIAHMGEC). 2 cysteine pairs are disulfide-bonded: Cys10–Cys29 and Cys18–Cys50. N-linked (GlcNAc...) asparagine glycans are attached at residues Asn30 and Asn41.

In terms of biological role, serine protease inhibitor. Strongly inhibits human neutrophil elastase and trypsin, also inhibits porcine pancreatic elastase and subtilisin A. Does not inhibit chymotrypsin, plasma kallikrein, pancreatic kallikrein, thrombin or papain. The protein is Protease inhibitor 2 of Cenchritis muricatus (Beaded periwinkle).